The chain runs to 158 residues: Large ribosomal subunit protein uL13 (158 aa).

It belongs to the universal ribosomal protein uL13 family. As to quaternary structure, part of the 50S ribosomal subunit.

Functionally, this protein is one of the early assembly proteins of the 50S ribosomal subunit, although it is not seen to bind rRNA by itself. It is important during the early stages of 50S assembly. This Rickettsia canadensis (strain McKiel) protein is Large ribosomal subunit protein uL13.